A 116-amino-acid polypeptide reads, in one-letter code: Protein Wnt-5a (116 aa).

Residue S1 is the site of O-palmitoleoyl serine; by PORCN attachment. N-linked (GlcNAc...) asparagine glycans are attached at residues N69 and N83. Residues C82 and C97 are joined by a disulfide bond.

The protein belongs to the Wnt family. In terms of processing, palmitoleoylation is required for efficient binding to frizzled receptors. Depalmitoleoylation leads to Wnt signaling pathway inhibition.

The protein localises to the secreted. It is found in the extracellular space. It localises to the extracellular matrix. Its function is as follows. Ligand for members of the frizzled family of seven transmembrane receptors. Can activate or inhibit canonical Wnt signaling, depending on receptor context. Required during embryogenesis for extension of the primary anterior-posterior axis. In Meleagris gallopavo (Wild turkey), this protein is Protein Wnt-5a (WNT5A).